The following is a 500-amino-acid chain: NAD(P)H-quinone oxidoreductase chain 4, chloroplastic (500 aa).

14 consecutive transmembrane segments (helical) span residues 3-23 (FFPWLTIIVVLPIFAGSVIFF), 37-57 (ICICILELLLTTYAFCYHFQF), 84-104 (GLSIGPILLTGFITTLATLAA), 111-129 (SRLFHFLMLAMYSGQIGSF), 134-154 (LLLFFIMWEFELIPVYLLLSI), 167-187 (FILYTAGGSIFLLMGVLGVGL), 208-228 (ALEIIFYIGFFIAFAVKSPII), 242-262 (HYSTCMLLAGILLKMGAYGLI), 272-292 (AHSIFSPWLVIVGTIQIIYAA), 305-325 (IAYSSVSHMGFILIGIGSITD), 330-350 (GAILQIISHGFIGAALFFLAG), 386-406 (LALPGMSGFVAELIVFFGIIT), 416-436 (ILITFVMAIGMILTPIYSLSM), and 462-482 (LFVSISIFLPVIGIGMYPDFV).

Belongs to the complex I subunit 4 family.

It localises to the plastid. It is found in the chloroplast thylakoid membrane. It carries out the reaction a plastoquinone + NADH + (n+1) H(+)(in) = a plastoquinol + NAD(+) + n H(+)(out). The catalysed reaction is a plastoquinone + NADPH + (n+1) H(+)(in) = a plastoquinol + NADP(+) + n H(+)(out). In Panax ginseng (Korean ginseng), this protein is NAD(P)H-quinone oxidoreductase chain 4, chloroplastic.